A 364-amino-acid polypeptide reads, in one-letter code: MALSRLMIRDFRNISVADLSLAADFNFLVGANGSGKTSVLEAIYTLGHGRAFRSLQSGRVIRHEQPEFVLHGRIEAGNVDARATSVGLSRNRLGDSTVRIDGSDGHKVAELAQLLPMQLITPEGFTLLNGGPKYRRAFMDWGCFHNEPAFFTAWSNLRRLLKQRNAALRQVSRYQQLRVWDQELIPLANRISEWRADYSAAIAADITATCAQFLPEFRLDFSFQRGWDKESDFGELLERQFERDRALTYTASGPHKADFRIRAEGVPVEDILSRGQLKLLMCALRLAQGEFLTHRNGRRCLYLIDDFASELDTGRRRLLAERLKATHAQVFVSAVSADQIRDIPDEKGKMFKVEQGKISLQSEV.

Residue 30-37 coordinates ATP; it reads GANGSGKT.

This sequence belongs to the RecF family.

The protein localises to the cytoplasm. Its function is as follows. The RecF protein is involved in DNA metabolism; it is required for DNA replication and normal SOS inducibility. RecF binds preferentially to single-stranded, linear DNA. It also seems to bind ATP. The polypeptide is DNA replication and repair protein RecF (Sodalis glossinidius (strain morsitans)).